The following is a 110-amino-acid chain: UPF0122 protein gbs1018 (110 aa).

Belongs to the UPF0122 family.

In terms of biological role, might take part in the signal recognition particle (SRP) pathway. This is inferred from the conservation of its genetic proximity to ftsY/ffh. May be a regulatory protein. This Streptococcus agalactiae serotype III (strain NEM316) protein is UPF0122 protein gbs1018.